The chain runs to 185 residues: Neuronal vesicle trafficking-associated protein 1 (185 aa).

The Cytoplasmic segment spans residues 1–82; it reads MVKLGNNFSE…ITEGVSERFK (82 aa). A helical; Signal-anchor for type II membrane protein transmembrane segment spans residues 83–103; sequence VTVLVLFALAFLTCVVFLVVY. Over 104-185 the chain is Lumenal; that stretch reads KVYKYDHTCP…QETEAAEKSA (82 aa).

This sequence belongs to the NSG family.

It localises to the membrane. The protein resides in the golgi apparatus. The protein localises to the trans-Golgi network membrane. It is found in the endosome membrane. Its subcellular location is the cell projection. It localises to the dendrite. The protein resides in the early endosome membrane. The protein localises to the late endosome membrane. It is found in the lysosome lumen. Its subcellular location is the recycling endosome membrane. It localises to the cytoplasmic vesicle membrane. The protein resides in the golgi stack membrane. The protein localises to the endosome. It is found in the multivesicular body membrane. Plays a role in the recycling mechanism in neurons of multiple receptors and acts at the level of early endosomes to promote sorting of receptors toward a recycling pathway. In Gallus gallus (Chicken), this protein is Neuronal vesicle trafficking-associated protein 1.